We begin with the raw amino-acid sequence, 216 residues long: Large ribosomal subunit protein bL25 (216 aa).

Positions Leu-191–Glu-216 are disordered. A compositionally biased stretch (acidic residues) spans Glu-195–Ala-204.

Belongs to the bacterial ribosomal protein bL25 family. CTC subfamily. In terms of assembly, part of the 50S ribosomal subunit; part of the 5S rRNA/L5/L18/L25 subcomplex. Contacts the 5S rRNA. Binds to the 5S rRNA independently of L5 and L18.

Its function is as follows. This is one of the proteins that binds to the 5S RNA in the ribosome where it forms part of the central protuberance. This Jannaschia sp. (strain CCS1) protein is Large ribosomal subunit protein bL25.